The following is a 101-amino-acid chain: Urease subunit beta (101 aa).

The protein belongs to the urease beta subunit family. As to quaternary structure, heterotrimer of UreA (gamma), UreB (beta) and UreC (alpha) subunits. Three heterotrimers associate to form the active enzyme.

The protein resides in the cytoplasm. The enzyme catalyses urea + 2 H2O + H(+) = hydrogencarbonate + 2 NH4(+). It functions in the pathway nitrogen metabolism; urea degradation; CO(2) and NH(3) from urea (urease route): step 1/1. In Leptothrix cholodnii (strain ATCC 51168 / LMG 8142 / SP-6) (Leptothrix discophora (strain SP-6)), this protein is Urease subunit beta.